A 299-amino-acid chain; its full sequence is Tyrosine recombinase XerC (299 aa).

The region spanning 1-85 is the Core-binding (CB) domain; it reads MKRQLEAYCA…AVRGLYRYLN (85 aa). One can recognise a Tyr recombinase domain in the interval 106 to 285; the sequence is RLPKVLDTDR…DFQHLAAVYD (180 aa). Catalysis depends on residues Arg146, Lys170, His237, Arg240, and His263. Tyr272 functions as the O-(3'-phospho-DNA)-tyrosine intermediate in the catalytic mechanism.

Belongs to the 'phage' integrase family. XerC subfamily. As to quaternary structure, forms a cyclic heterotetrameric complex composed of two molecules of XerC and two molecules of XerD.

The protein localises to the cytoplasm. Site-specific tyrosine recombinase, which acts by catalyzing the cutting and rejoining of the recombining DNA molecules. The XerC-XerD complex is essential to convert dimers of the bacterial chromosome into monomers to permit their segregation at cell division. It also contributes to the segregational stability of plasmids. The chain is Tyrosine recombinase XerC from Pseudomonas putida (strain ATCC 700007 / DSM 6899 / JCM 31910 / BCRC 17059 / LMG 24140 / F1).